Reading from the N-terminus, the 732-residue chain is Zinc-exporting P-type ATPase (732 aa).

Residues 29–96 form the HMA domain; sequence GRMRVRADWV…AIGGAKHVAA (68 aa). 6 helical membrane-spanning segments follow: residues 105 to 123, 146 to 164, 172 to 186, 195 to 209, 342 to 366, and 372 to 390; these read HSTE…GGAA, MVAT…RGAL, AGTD…IASL, LTVL…YLQD, VGEN…LVTG, and MTML…TPTA. Aspartate 423 serves as the catalytic 4-aspartylphosphate intermediate. 3 residues coordinate Mg(2+): aspartate 423, threonine 425, and aspartate 625. The next 2 helical transmembrane spans lie at 676-695 and 705-724; these read AVDV…AAGL and PVLA…ANSS.

Belongs to the cation transport ATPase (P-type) (TC 3.A.3) family. Type IB subfamily.

It localises to the cell membrane. It catalyses the reaction Zn(2+)(in) + ATP + H2O = Zn(2+)(out) + ADP + phosphate + H(+). In terms of biological role, zn(2+) efflux transporter which is involved in detoxification of zinc during infection. The protein is Zinc-exporting P-type ATPase of Mycobacterium marinum (strain ATCC BAA-535 / M).